Reading from the N-terminus, the 464-residue chain is Serine/threonine-protein kinase 38-like (464 aa).

Ala-2 carries the post-translational modification N-acetylalanine. The interval 63–88 is S100B binding; that stretch reads KKLRRSQHARKETEFLRLKRTRLGLD. At Thr-75 the chain carries Phosphothreonine. One can recognise a Protein kinase domain in the interval 90 to 383; that stretch reads FESLKVIGRG…VEEIKGHPFF (294 aa). Residues 96–104 and Lys-119 each bind ATP; that span reads IGRGAFGEV. Residue Asp-213 is the Proton acceptor of the active site. At Ser-282 the chain carries Phosphoserine; by autocatalysis. The 70-residue stretch at 384–453 folds into the AGC-kinase C-terminal domain; it reads EGVDWEHIRE…KRFEGLTQRG (70 aa). Thr-442 bears the Phosphothreonine; by STK24/MST3 mark.

Belongs to the protein kinase superfamily. AGC Ser/Thr protein kinase family. As to quaternary structure, homodimeric S100B binds two molecules of STK38L. Interacts with MICAL1; leading to inhibit the protein kinase activity by antagonizing activation by MST1/STK4. Interacts with MOB1 and MOB2. Mg(2+) is required as a cofactor. As to expression, ubiquitously expressed with highest levels observed in the thymus.

The protein resides in the cytoplasm. Its subcellular location is the cytoskeleton. It is found in the membrane. The catalysed reaction is L-seryl-[protein] + ATP = O-phospho-L-seryl-[protein] + ADP + H(+). It carries out the reaction L-threonyl-[protein] + ATP = O-phospho-L-threonyl-[protein] + ADP + H(+). Its activity is regulated as follows. Activated by binding of S100B which releases autoinhibitory N-lobe interactions, enabling ATP to bind and the autophosphorylation of Ser-282. Thr-442 then undergoes calcium-dependent phosphorylation by STK24/MST3. Interactions between phosphorylated Thr-442 and the N-lobe promote additional structural changes that complete the activation of the kinase. Autoinhibition is also released by the binding of MOB1/MOBKL1A and MOB2/HCCA2 to the N-terminal of STK38L. Its function is as follows. Involved in the regulation of structural processes in differentiating and mature neuronal cells. The polypeptide is Serine/threonine-protein kinase 38-like (Homo sapiens (Human)).